The primary structure comprises 96 residues: Gastrolith matrix protein (96 aa).

9 tandem repeats follow at residues 11–15, 16–20, 21–25, 30–34, 35–39, 50–54, 55–59, 65–69, and 70–74. A 9 X 5 AA tandem repeat of G-S-X-X-F region spans residues 11 to 74; sequence GSAGFGSTNF…GSTGFGSSSF (64 aa). Residues 75–96 are disordered; that stretch reads GSTSGLPYLVVIPNNPAVGGLR.

In terms of processing, the N-terminus is blocked. Expressed in the gastroliths.

The protein resides in the secreted. Its function is as follows. Associates with chitin and plays a role in calcification. This is Gastrolith matrix protein from Procambarus clarkii (Red swamp crayfish).